The following is a 171-amino-acid chain: Protein phosphatase 1 regulatory subunit 1A (171 aa).

Methionine 1 carries the N-acetylmethionine modification. Residues 9–12 form an essential for activity region; the sequence is KIQF. Residues 17–171 form a disordered region; sequence LEPHLDPEAA…PLDSQGASLV (155 aa). The segment covering 19 to 29 has biased composition (basic and acidic residues); that stretch reads PHLDPEAAEQI. Phosphothreonine; by PKA is present on threonine 35. Residues 42-54 form an essential for activity region; the sequence is TSDQSSPEVDEDR. Residues serine 43, serine 46, serine 47, and serine 67 each carry the phosphoserine modification. Polar residues predominate over residues 122–133; the sequence is GSASRPDTSGTA. Residues 137–148 show a composition bias toward basic and acidic residues; sequence AESKPKTQEQRG. The segment at 143-171 is interaction with PPP1R15A; that stretch reads TQEQRGVEPSTEDLSAHMLPLDSQGASLV.

It belongs to the protein phosphatase inhibitor 1 family. Interacts with PPP1R15A. In terms of processing, phosphorylation of Thr-35 is required for activity.

Functionally, inhibitor of protein-phosphatase 1. This protein may be important in hormonal control of glycogen metabolism. Hormones that elevate intracellular cAMP increase I-1 activity in many tissues. I-1 activation may impose cAMP control over proteins that are not directly phosphorylated by PKA. Following a rise in intracellular calcium, I-1 is inactivated by calcineurin (or PP2B). Does not inhibit type-2 phosphatases. The polypeptide is Protein phosphatase 1 regulatory subunit 1A (Ppp1r1a) (Rattus norvegicus (Rat)).